The primary structure comprises 288 residues: uncharacterized protein (288 aa).

This is an uncharacterized protein from Acanthamoeba polyphaga mimivirus (APMV).